Consider the following 446-residue polypeptide: Cytochrome P450 monooxygenase ptmP (446 aa).

Residues 19–39 (VTVIWILMALVLLAYLILPNP) form a helical membrane-spanning segment. Cys385 provides a ligand contact to heme. An N-linked (GlcNAc...) asparagine glycan is attached at Asn430.

Belongs to the cytochrome P450 family. Heme serves as cofactor.

It is found in the membrane. Its pathway is secondary metabolite biosynthesis. Its function is as follows. Cytochrome P450 monooxygenase; part of the gene cluster that mediates the biosynthesis of the indole diterpenes penitrems. The geranylgeranyl diphosphate (GGPP) synthase ptmG catalyzes the first step in penitrem biosynthesis via conversion of farnesyl pyrophosphate and isopentyl pyrophosphate into geranylgeranyl pyrophosphate (GGPP). Condensation of indole-3-glycerol phosphate with GGPP by the prenyl transferase ptmC then forms 3-geranylgeranylindole (3-GGI). Epoxidation by the FAD-dependent monooxygenase ptmM leads to a epoxidized-GGI that is substrate of the terpene cyclase ptmB for cyclization to yield paspaline. Paspaline is subsequently converted to 13-desoxypaxilline by the cytochrome P450 monooxygenase ptmP, the latter being then converted to paxilline by the cytochrome P450 monooxygenase ptmQ. Paxilline is converted to beta-paxitriol via C-10 ketoreduction by the short-chain dehydrogenase ptmH which can be monoprenylated at the C-20 by the indole diterpene prenyltransferase ptmD. A two-step elimination (acetylation and elimination) process performed by the O-acetyltransferase ptmV and ptmI leads to the production of the prenylated form of penijanthine. The FAD-linked oxidoreductase ptmO then converts the prenylated form of penijanthine into PC-M5 which is in turn transformed into PC-M4 by the aromatic dimethylallyltransferase ptmE. Five sequential oxidative transformations performed by the cytochrome P450 monooxygenases ptmK, ptmU, ptmL, ptmN and ptmJ yield the various penitrem compounds. PtmK, ptmU and ptmM are involved in the formation of the key bicyclic ring of penitrem C via the formation of the intermediates secopenitrem D and penitrem D. PtmL catalyzes the epoxidation of penitrem D and C to yield penitrem B and F, respectively. PtmJ catalyzes the last benzylic hydroxylation to convert penitrem B to prenitrem E and penitrem F to penitrem A. The polypeptide is Cytochrome P450 monooxygenase ptmP (Penicillium ochrochloron).